A 277-amino-acid chain; its full sequence is Urease accessory protein UreD (277 aa).

Belongs to the UreD family. In terms of assembly, ureD, UreF and UreG form a complex that acts as a GTP-hydrolysis-dependent molecular chaperone, activating the urease apoprotein by helping to assemble the nickel containing metallocenter of UreC. The UreE protein probably delivers the nickel.

The protein resides in the cytoplasm. Functionally, required for maturation of urease via the functional incorporation of the urease nickel metallocenter. This chain is Urease accessory protein UreD, found in Flavobacterium johnsoniae (strain ATCC 17061 / DSM 2064 / JCM 8514 / BCRC 14874 / CCUG 350202 / NBRC 14942 / NCIMB 11054 / UW101) (Cytophaga johnsonae).